The primary structure comprises 160 residues: Nucleotide-binding protein ASA_3207 (160 aa).

Belongs to the YajQ family.

Nucleotide-binding protein. The chain is Nucleotide-binding protein ASA_3207 from Aeromonas salmonicida (strain A449).